The following is a 126-amino-acid chain: uncharacterized protein (126 aa).

This is an uncharacterized protein from Invertebrate iridescent virus 6 (IIV-6).